The primary structure comprises 665 residues: DNA ligase (665 aa).

Residues 31–35 (DEEFD), 80–81 (SL), and Glu-111 each bind NAD(+). The N6-AMP-lysine intermediate role is filled by Lys-113. The NAD(+) site is built by Arg-134, Glu-171, Lys-287, and Lys-311. Zn(2+)-binding residues include Cys-405, Cys-408, Cys-423, and Cys-429. Residues 588–665 (FTNHAFQGKI…NEKEFISLCH (78 aa)) form the BRCT domain.

This sequence belongs to the NAD-dependent DNA ligase family. LigA subfamily. The cofactor is Mg(2+). Requires Mn(2+) as cofactor.

The enzyme catalyses NAD(+) + (deoxyribonucleotide)n-3'-hydroxyl + 5'-phospho-(deoxyribonucleotide)m = (deoxyribonucleotide)n+m + AMP + beta-nicotinamide D-nucleotide.. Functionally, DNA ligase that catalyzes the formation of phosphodiester linkages between 5'-phosphoryl and 3'-hydroxyl groups in double-stranded DNA using NAD as a coenzyme and as the energy source for the reaction. It is essential for DNA replication and repair of damaged DNA. In Protochlamydia amoebophila (strain UWE25), this protein is DNA ligase.